Reading from the N-terminus, the 512-residue chain is Cytochrome P450 72A13 (512 aa).

Residues 2 to 22 (EISVASVTVSVAVVVVSWWVW) traverse the membrane as a helical segment. A heme-binding site is contributed by cysteine 460.

It belongs to the cytochrome P450 family. Heme is required as a cofactor.

The protein resides in the membrane. This Arabidopsis thaliana (Mouse-ear cress) protein is Cytochrome P450 72A13 (CYP72A13).